A 225-amino-acid polypeptide reads, in one-letter code: Interleukin-6 (225 aa).

An N-terminal signal peptide occupies residues 1 to 24 (MPSRLNVFWLCAAALAALLRCAPA). N-linked (GlcNAc...) asparagine glycosylation occurs at Asn98.

This sequence belongs to the IL-6 superfamily. Component of a hexamer of two molecules each of IL6, IL6R and IL6ST; first binds to IL6R to associate with the signaling subunit IL6ST. As to expression, expressed in white muscle, skin, spleen, anterior intestine and stomach. Not expressed in brain, gill, head kidney, posterior intestine and adipose tissue.

The protein resides in the secreted. Functionally, cytokine with a wide variety of biological functions in immunity, tissue regeneration, and metabolism. Binds to IL6R, then the complex associates to the signaling subunit IL6ST/gp130 to trigger the intracellular IL6-signaling pathway. The interaction with the membrane-bound IL6R and IL6ST stimulates 'classic signaling', whereas the binding of IL6 and soluble IL6R to IL6ST stimulates 'trans-signaling'. Alternatively, 'cluster signaling' occurs when membrane-bound IL6:IL6R complexes on transmitter cells activate IL6ST receptors on neighboring receiver cells. This Sparus aurata (Gilthead sea bream) protein is Interleukin-6 (il6).